Reading from the N-terminus, the 565-residue chain is Frizzled-2 (565 aa).

The N-terminal stretch at 1 to 23 (MRPRSALPRLLLPLLLLPAAGPA) is a signal peptide. Residues 24-247 (QFHGEKGISI…QEETRFARLW (224 aa)) are Extracellular-facing. An FZ domain is found at 34-153 (PDHGFCQPIS…HGAEQICVGQ (120 aa)). Intrachain disulfides connect Cys-39-Cys-100, Cys-47-Cys-93, Cys-84-Cys-121, Cys-110-Cys-150, and Cys-114-Cys-138. A glycan (N-linked (GlcNAc...) asparagine) is linked at Asn-53. A glycan (N-linked (GlcNAc...) asparagine) is linked at Asn-154. The segment at 160-189 (APALLTTAPPPGLQPGAGGTPGGPGGGGAP) is disordered. Residues 174 to 188 (PGAGGTPGGPGGGGA) show a composition bias toward gly residues. A helical membrane pass occupies residues 248 to 268 (ILTWSVLCCASTFFTVTTYLV). Residues 269-279 (DMQRFRYPERP) lie on the Cytoplasmic side of the membrane. Residues 280-300 (IIFLSGCYTMVSVAYIAGFVL) traverse the membrane as a helical segment. At 301-327 (QERVVCNERFSEDGYRTVVQGTKKEGC) the chain is on the extracellular side. A helical transmembrane segment spans residues 328-348 (TILFMMLYFFSMASSIWWVIL). Topologically, residues 349 to 370 (SLTWFLAAGMKWGHEAIEANSQ) are cytoplasmic. The chain crosses the membrane as a helical span at residues 371 to 391 (YFHLAAWAVPAVKTITILAMG). The Extracellular portion of the chain corresponds to 392–414 (QIDGDLLSGVCFVGLNSLDPLRG). The helical transmembrane segment at 415 to 435 (FVLAPLFVYLFIGTSFLLAGF) threads the bilayer. Residues 436-461 (VSLFRIRTIMKHDGTKTEKLERLMVR) are Cytoplasmic-facing. A helical membrane pass occupies residues 462-482 (IGVFSVLYTVPATIVIACYFY). Residues 483–519 (EQAFREHWERSWVSQHCKSLAIPCPAHYTPRMSPDFT) lie on the Extracellular side of the membrane. The helical transmembrane segment at 520–540 (VYMIKYLMTLIVGITSGFWIW) threads the bilayer. At 541 to 565 (SGKTLHSWRKFYTRLTNSRHGETTV) the chain is on the cytoplasmic side. The short motif at 543 to 548 (KTLHSW) is the Lys-Thr-X-X-X-Trp motif, mediates interaction with the PDZ domain of Dvl family members element. Positions 563–565 (TTV) match the PDZ-binding motif.

The protein belongs to the G-protein coupled receptor Fz/Smo family. As to quaternary structure, (Microbial infection) Interacts with C.difficile toxin TcdB; frizzled receptors constitute the major host receptors for TcdB in the colonic epithelium. In terms of processing, ubiquitinated by ZNRF3, leading to its degradation by the proteasome. In terms of tissue distribution, widely expressed. In the adult, mainly found in heart, placenta, skeletal muscle, lung, kidney, pancreas, prostate, testis, ovary and colon. In the fetus, expressed in brain, lung and kidney. Low levels in fetal liver.

Its subcellular location is the membrane. It is found in the cell membrane. Functionally, receptor for Wnt proteins. Most of frizzled receptors are coupled to the beta-catenin canonical signaling pathway, which leads to the activation of disheveled proteins, inhibition of GSK-3 kinase, nuclear accumulation of beta-catenin and activation of Wnt target genes. A second signaling pathway involving PKC and calcium fluxes has been seen for some family members, but it is not yet clear if it represents a distinct pathway or if it can be integrated in the canonical pathway, as PKC seems to be required for Wnt-mediated inactivation of GSK-3 kinase. Both pathways seem to involve interactions with G-proteins. May be involved in transduction and intercellular transmission of polarity information during tissue morphogenesis and/or in differentiated tissues. Its function is as follows. (Microbial infection) Acts as a receptor for C.difficile toxin TcdB in the colonic epithelium. TcdB occupies the binding site for Wnt-adducted palmitoleate in frizzled receptors and TcdB-binding prevents Wnt-binding and downstream Wnt signaling. The sequence is that of Frizzled-2 (FZD2) from Homo sapiens (Human).